Reading from the N-terminus, the 745-residue chain is uncharacterized protein (745 aa).

The HTH araC/xylS-type domain maps to 158–256 (NQVCDYIELH…HQTPKQYRGD (99 aa)). DNA-binding regions (H-T-H motif) lie at residues 175–196 (SELS…TESL) and 223–246 (ITDI…KHFT).

This is an uncharacterized protein from Staphylococcus aureus (strain COL).